A 251-amino-acid polypeptide reads, in one-letter code: UPF0309 protein SCO4393 (251 aa).

Positions 36–220 constitute an SIS domain; sequence LADTVQNGGR…AATLADRGIE (185 aa).

The protein belongs to the UPF0309 family.

The protein is UPF0309 protein SCO4393 of Streptomyces coelicolor (strain ATCC BAA-471 / A3(2) / M145).